The sequence spans 467 residues: Ribulose bisphosphate carboxylase large chain (467 aa).

An N6,N6,N6-trimethyllysine modification is found at K5. N114 and T164 together coordinate substrate. K166 functions as the Proton acceptor in the catalytic mechanism. A substrate-binding site is contributed by K168. Mg(2+)-binding residues include K192, D194, and E195. K192 bears the N6-carboxylysine mark. The Proton acceptor role is filled by H285. Substrate contacts are provided by R286, H318, and S370.

This sequence belongs to the RuBisCO large chain family. Type I subfamily. Heterohexadecamer of 8 large chains and 8 small chains; disulfide-linked. The disulfide link is formed within the large subunit homodimers. The cofactor is Mg(2+). The disulfide bond which can form in the large chain dimeric partners within the hexadecamer appears to be associated with oxidative stress and protein turnover.

It is found in the plastid. The protein localises to the chloroplast. It carries out the reaction 2 (2R)-3-phosphoglycerate + 2 H(+) = D-ribulose 1,5-bisphosphate + CO2 + H2O. It catalyses the reaction D-ribulose 1,5-bisphosphate + O2 = 2-phosphoglycolate + (2R)-3-phosphoglycerate + 2 H(+). Functionally, ruBisCO catalyzes two reactions: the carboxylation of D-ribulose 1,5-bisphosphate, the primary event in carbon dioxide fixation, as well as the oxidative fragmentation of the pentose substrate in the photorespiration process. Both reactions occur simultaneously and in competition at the same active site. The sequence is that of Ribulose bisphosphate carboxylase large chain from Scutellaria bolanderi (Sierra skullcap).